Here is a 90-residue protein sequence, read N- to C-terminus: uncharacterized protein (90 aa).

The chain crosses the membrane as a helical span at residues 15 to 34; it reads HVLAISTFIATAAVASYFTT. Residues 34–65 are disordered; the sequence is TKPKTKNEGKNSSALSQQKSGESSNSDAMGKD. Positions 43–60 are enriched in polar residues; the sequence is KNSSALSQQKSGESSNSD. An N-linked (GlcNAc...) asparagine glycan is attached at Asn44.

The protein localises to the mitochondrion membrane. This is an uncharacterized protein from Saccharomyces cerevisiae (strain ATCC 204508 / S288c) (Baker's yeast).